The primary structure comprises 144 residues: MKLDQIDLNIIEELKKDSRLSMRELGRKIKLSPPSVTERVRQLESFGIIKQYTLEVDQKKLGLPVSCIVEATVKNADYERFKSYIQTLPNIEFCYRIAGAACYMLKINAESLEAVEDFINKTSPYAQTVTHVIFSEIDTKNGRG.

Residues 3 to 64 enclose the HTH asnC-type domain; that stretch reads LDQIDLNIIE…EVDQKKLGLP (62 aa). A DNA-binding region (H-T-H motif) is located at residues 22-41; the sequence is MRELGRKIKLSPPSVTERVR.

Transcriptional regulator with a possible role in regulation of amino acid metabolism. Plays a role in the growth phase transition. This is HTH-type transcriptional regulator LrpC (lrpC) from Bacillus subtilis (strain 168).